Reading from the N-terminus, the 622-residue chain is Basic helix-loop-helix ARNT-like protein 2 (622 aa).

The segment covering 1–10 (MAEAGVGSAE) has biased composition (low complexity). 2 disordered regions span residues 1-29 (MAEA…DGNS) and 41-86 (PITK…EDEE). Over residues 45 to 54 (PATTSFNNSV) the composition is skewed to polar residues. A compositionally biased stretch (acidic residues) spans 67–76 (DNQDTVEVDG). The span at 77 to 86 (DPQKRNEDEE) shows a compositional bias: basic and acidic residues. A bHLH domain is found at 92 to 145 (DFREAHSQTEKRRRDKMNNLIEELSAMIPQCNPMARKLDKLTVLRMAVQHLKSL). PAS domains are found at residues 163–235 (KDDE…DVSP) and 342–412 (VPQK…LQNK). The PAC domain occupies 417–460 (TNSYKFRAKDGSFITLKSQWFSFMNPWTKELEYIVSNNTVVLGH).

In terms of assembly, component of the circadian core oscillator, which includes the CRY proteins, CLOCK, or NPAS2, BMAL1 or BMAL2, CSNK1D and/or CSNK1E, TIMELESS and the PER proteins. Interacts directly with CLOCK to form the BMAL2-CLOCK transactivator. Can form heterodimers or homodimers which interact directly with CLOCK to form the transcription activator. In terms of tissue distribution, expressed in the pineal gland.

It localises to the nucleus. In terms of biological role, transcriptional activator which forms a core component of the circadian clock. The circadian clock, an internal time-keeping system, regulates various physiological processes through the generation of approximately 24 hour circadian rhythms in gene expression, which are translated into rhythms in metabolism and behavior. It is derived from the Latin roots 'circa' (about) and 'diem' (day) and acts as an important regulator of a wide array of physiological functions including metabolism, sleep, body temperature, blood pressure, endocrine, immune, cardiovascular, and renal function. Consists of two major components: the central clock, residing in the suprachiasmatic nucleus (SCN) of the brain, and the peripheral clocks that are present in nearly every tissue and organ system. Both the central and peripheral clocks can be reset by environmental cues, also known as Zeitgebers (German for 'timegivers'). The predominant Zeitgeber for the central clock is light, which is sensed by retina and signals directly to the SCN. The central clock entrains the peripheral clocks through neuronal and hormonal signals, body temperature and feeding-related cues, aligning all clocks with the external light/dark cycle. Circadian rhythms allow an organism to achieve temporal homeostasis with its environment at the molecular level by regulating gene expression to create a peak of protein expression once every 24 hours to control when a particular physiological process is most active with respect to the solar day. Transcription and translation of core clock components (CLOCK, NPAS2, BMAL1, BMAL2, PER1, PER2, PER3, CRY1 and CRY2) plays a critical role in rhythm generation, whereas delays imposed by post-translational modifications (PTMs) are important for determining the period (tau) of the rhythms (tau refers to the period of a rhythm and is the length, in time, of one complete cycle). A diurnal rhythm is synchronized with the day/night cycle, while the ultradian and infradian rhythms have a period shorter and longer than 24 hours, respectively. Disruptions in the circadian rhythms contribute to the pathology of cardiovascular diseases, cancer, metabolic syndromes and aging. A transcription/translation feedback loop (TTFL) forms the core of the molecular circadian clock mechanism. Transcription factors, CLOCK or NPAS2 and BMAL1 or BMAL2, form the positive limb of the feedback loop, act in the form of a heterodimer and activate the transcription of core clock genes and clock-controlled genes (involved in key metabolic processes), harboring E-box elements (5'-CACGTG-3') within their promoters. The core clock genes: PER1/2/3 and CRY1/2 which are transcriptional repressors form the negative limb of the feedback loop and interact with the CLOCK|NPAS2-BMAL1|BMAL2 heterodimer inhibiting its activity and thereby negatively regulating their own expression. This heterodimer also activates nuclear receptors NR1D1/2 and RORA/B/G, which form a second feedback loop and which activate and repress BMAL1 transcription, respectively. The preferred binding motif for the CLOCK-BMAL1 heterodimer is 5'-CACGTGA-3', which contains a flanking adenine nucleotide at the 3-prime end of the canonical 6-nucleotide E-box sequence. CLOCK specifically binds to the half-site 5'-CAC-3', while BMAL1 binds to the half-site 5'-GTGA-3'. This chain is Basic helix-loop-helix ARNT-like protein 2 (BMAL2), found in Gallus gallus (Chicken).